The chain runs to 268 residues: Tryptophan synthase alpha chain (268 aa).

Catalysis depends on proton acceptor residues Glu49 and Asp60.

It belongs to the TrpA family. As to quaternary structure, tetramer of two alpha and two beta chains.

The catalysed reaction is (1S,2R)-1-C-(indol-3-yl)glycerol 3-phosphate + L-serine = D-glyceraldehyde 3-phosphate + L-tryptophan + H2O. It functions in the pathway amino-acid biosynthesis; L-tryptophan biosynthesis; L-tryptophan from chorismate: step 5/5. The alpha subunit is responsible for the aldol cleavage of indoleglycerol phosphate to indole and glyceraldehyde 3-phosphate. This chain is Tryptophan synthase alpha chain, found in Xanthomonas oryzae pv. oryzae (strain PXO99A).